The primary structure comprises 390 residues: 8-amino-7-oxononanoate synthase (390 aa).

A substrate-binding site is contributed by arginine 19. A pyridoxal 5'-phosphate-binding site is contributed by 106–107 (GY). Residue histidine 131 coordinates substrate. Pyridoxal 5'-phosphate-binding residues include serine 176, histidine 204, and threonine 233. Residue lysine 236 is modified to N6-(pyridoxal phosphate)lysine. Threonine 350 contributes to the substrate binding site.

This sequence belongs to the class-II pyridoxal-phosphate-dependent aminotransferase family. BioF subfamily. Homodimer. The cofactor is pyridoxal 5'-phosphate.

It catalyses the reaction 6-carboxyhexanoyl-[ACP] + L-alanine + H(+) = (8S)-8-amino-7-oxononanoate + holo-[ACP] + CO2. It functions in the pathway cofactor biosynthesis; biotin biosynthesis. In terms of biological role, catalyzes the decarboxylative condensation of pimeloyl-[acyl-carrier protein] and L-alanine to produce 8-amino-7-oxononanoate (AON), [acyl-carrier protein], and carbon dioxide. The chain is 8-amino-7-oxononanoate synthase from Pseudomonas putida (strain ATCC 47054 / DSM 6125 / CFBP 8728 / NCIMB 11950 / KT2440).